Reading from the N-terminus, the 349-residue chain is Isopentenyl-diphosphate delta-isomerase (349 aa).

6–7 (RK) provides a ligand contact to substrate. Residues 62–64 (AMT), S93, and N122 contribute to the FMN site. A substrate-binding site is contributed by Q152. Position 153 (E153) interacts with Mg(2+). Residues K184, T214, 258-259 (GG), and 280-281 (AG) contribute to the FMN site.

Belongs to the IPP isomerase type 2 family. As to quaternary structure, homooctamer. Dimer of tetramers. The cofactor is FMN. It depends on NADPH as a cofactor. Requires Mg(2+) as cofactor.

It is found in the cytoplasm. It catalyses the reaction isopentenyl diphosphate = dimethylallyl diphosphate. In terms of biological role, involved in the biosynthesis of isoprenoids. Catalyzes the 1,3-allylic rearrangement of the homoallylic substrate isopentenyl (IPP) to its allylic isomer, dimethylallyl diphosphate (DMAPP). The sequence is that of Isopentenyl-diphosphate delta-isomerase from Bacillus cytotoxicus (strain DSM 22905 / CIP 110041 / 391-98 / NVH 391-98).